We begin with the raw amino-acid sequence, 473 residues long: Cysteine--tRNA ligase (473 aa).

C28 contributes to the Zn(2+) binding site. The 'HIGH' region motif lies at 30-40 (MTVYDYCHLGH). 3 residues coordinate Zn(2+): C209, H234, and E238. Residues 282-286 (KMSKS) carry the 'KMSKS' region motif. Position 285 (K285) interacts with ATP.

Belongs to the class-I aminoacyl-tRNA synthetase family. Monomer. The cofactor is Zn(2+).

Its subcellular location is the cytoplasm. It carries out the reaction tRNA(Cys) + L-cysteine + ATP = L-cysteinyl-tRNA(Cys) + AMP + diphosphate. This Neisseria gonorrhoeae (strain ATCC 700825 / FA 1090) protein is Cysteine--tRNA ligase.